A 160-amino-acid polypeptide reads, in one-letter code: Ribosomal RNA large subunit methyltransferase H (160 aa).

S-adenosyl-L-methionine-binding positions include L76, G108, and 127–132 (LGKMTW).

This sequence belongs to the RNA methyltransferase RlmH family. In terms of assembly, homodimer.

The protein localises to the cytoplasm. It carries out the reaction pseudouridine(1915) in 23S rRNA + S-adenosyl-L-methionine = N(3)-methylpseudouridine(1915) in 23S rRNA + S-adenosyl-L-homocysteine + H(+). Functionally, specifically methylates the pseudouridine at position 1915 (m3Psi1915) in 23S rRNA. This Rhizobium rhizogenes (strain K84 / ATCC BAA-868) (Agrobacterium radiobacter) protein is Ribosomal RNA large subunit methyltransferase H.